The chain runs to 417 residues: Odorant receptor 65a (417 aa).

At 1-62 (MTELRSERKN…MNSEQRRLPR (62 aa)) the chain is on the cytoplasmic side. A helical transmembrane segment spans residues 63–83 (IVAWQYFVSIQLATALASLFY). The Extracellular segment spans residues 84–98 (GISESIGDIVNLGRD). The chain crosses the membrane as a helical span at residues 99–119 (LVFIITIIFICFRLVFFAQYA). Over 120–152 (GELDVIIDALEDIYHWSIKGPATKEVQETKRLH) the chain is Cytoplasmic. Residues 153 to 173 (FLLFMALIITWFSFLILFMLI) traverse the membrane as a helical segment. The Extracellular segment spans residues 174-206 (KISTPFWIESQTLPFHVSWPFQLHDPSKHPIAY). The helical transmembrane segment at 207-227 (IIIFVSQSTTMLYFLIWLGVV) threads the bilayer. Topologically, residues 228-290 (ENMGVSLFFE…TDRCNHIFNG (63 aa)) are cytoplasmic. Residues 291 to 311 (AFIMQMLINFLLVSLSLFEVL) traverse the membrane as a helical segment. The Extracellular segment spans residues 312-316 (AAKKN). Residues 317-337 (PQVAVEYMIIMLMTLGHLSFW) form a helical membrane-spanning segment. Residues 338-393 (SKFGDMFSKESEQVALAVYEAYDPNVGSKSIHRQFCFFIQRAQKPLIMKASPFPPF) are Cytoplasmic-facing. A helical transmembrane segment spans residues 394 to 414 (NLENYMFILKQCYSILTILAN). At 415–417 (TLE) the chain is on the extracellular side.

The protein belongs to the insect chemoreceptor superfamily. Heteromeric odorant receptor channel (TC 1.A.69) family. Or49a subfamily. Interacts with Orco. Complexes exist early in the endomembrane system in olfactory sensory neurons (OSNs), coupling these complexes to the conserved ciliary trafficking pathway. As to expression, expressed in olfactory sensory neurons in the antenna.

The protein localises to the cell membrane. Odorant receptor which mediates acceptance or avoidance behavior, depending on its substrates. The odorant receptor repertoire encodes a large collection of odor stimuli that vary widely in identity, intensity, and duration. May form a complex with Orco to form odorant-sensing units, providing sensitive and prolonged odorant signaling and calcium permeability. Involved in olfactory communication for modulating aggression through the sensing of the male-specific pheromone 11-cis-vaccenyl acetate (cVA). Although acute exposure to cVA elicites aggression through Or67d olfactory receptor neurons (ORNs), chronic cVA exposure reduces aggression through Or65a ORNs. Moreover, cVA leads to generalized learning with mated females. It is a major component of the male cuticular hydrocarbon profile, but it is not found on virgin females. During copulation, cVA is transferred to the female in ejaculate along with sperm and peptides that decrease her sexual receptivity. This Drosophila melanogaster (Fruit fly) protein is Odorant receptor 65a (Or65a).